A 63-amino-acid chain; its full sequence is Large ribosomal subunit protein uL29 (63 aa).

Belongs to the universal ribosomal protein uL29 family.

This chain is Large ribosomal subunit protein uL29, found in Pseudoalteromonas atlantica (strain T6c / ATCC BAA-1087).